A 102-amino-acid polypeptide reads, in one-letter code: Small ribosomal subunit protein bS6 (102 aa).

The protein belongs to the bacterial ribosomal protein bS6 family.

Functionally, binds together with bS18 to 16S ribosomal RNA. This is Small ribosomal subunit protein bS6 from Deinococcus geothermalis (strain DSM 11300 / CIP 105573 / AG-3a).